The primary structure comprises 229 residues: Urease accessory protein UreF (229 aa).

The protein belongs to the UreF family. In terms of assembly, ureD, UreF and UreG form a complex that acts as a GTP-hydrolysis-dependent molecular chaperone, activating the urease apoprotein by helping to assemble the nickel containing metallocenter of UreC. The UreE protein probably delivers the nickel.

Its subcellular location is the cytoplasm. Its function is as follows. Required for maturation of urease via the functional incorporation of the urease nickel metallocenter. This Staphylococcus aureus (strain JH1) protein is Urease accessory protein UreF.